Reading from the N-terminus, the 491-residue chain is Cysteine--tRNA ligase (491 aa).

Zn(2+) is bound at residue Cys31. The 'HIGH' region motif lies at 33–43 (PTVYGDAHLGH). Zn(2+)-binding residues include Cys226, His251, and Glu255. The 'KMSKS' region motif lies at 283-287 (KMGKS). Residue Lys286 coordinates ATP.

This sequence belongs to the class-I aminoacyl-tRNA synthetase family. As to quaternary structure, monomer. Zn(2+) serves as cofactor.

It localises to the cytoplasm. The enzyme catalyses tRNA(Cys) + L-cysteine + ATP = L-cysteinyl-tRNA(Cys) + AMP + diphosphate. In Parabacteroides distasonis (strain ATCC 8503 / DSM 20701 / CIP 104284 / JCM 5825 / NCTC 11152), this protein is Cysteine--tRNA ligase.